Consider the following 179-residue polypeptide: O-acetyl-ADP-ribose deacetylase (179 aa).

The 175-residue stretch at 1-175 folds into the Macro domain; the sequence is MTSRLQVIQG…LYARLLTQQG (175 aa). Substrate-binding positions include 11-12, N25, 33-35, and 122-126; these read DI, GVD, and STGVY. The active-site Proton acceptor is the D35.

This sequence belongs to the MacroD-type family. YmdB subfamily. Homodimer. Interacts with RNase III.

It catalyses the reaction 3''-O-acetyl-ADP-D-ribose + H2O = ADP-D-ribose + acetate + H(+). The catalysed reaction is 2''-O-acetyl-ADP-D-ribose + H2O = ADP-D-ribose + acetate + H(+). Its function is as follows. Deacetylates O-acetyl-ADP ribose to yield ADP-ribose and free acetate. Down-regulates ribonuclease 3 (RNase III) activity. Acts by interacting directly with the region of the ribonuclease that is required for dimerization/activation. This is O-acetyl-ADP-ribose deacetylase from Salmonella typhi.